Consider the following 388-residue polypeptide: S-adenosylmethionine synthase (388 aa).

An ATP-binding site is contributed by histidine 16. Residue aspartate 18 participates in Mg(2+) binding. Glutamate 44 contacts K(+). Glutamate 57 and glutamine 100 together coordinate L-methionine. Residues 100–110 form a flexible loop region; sequence QSPEIAQGVDR. ATP is bound by residues 165 to 167, aspartate 240, 246 to 247, alanine 263, and lysine 267; these read DAK and RK. Residue aspartate 240 coordinates L-methionine. Lysine 271 serves as a coordination point for L-methionine.

It belongs to the AdoMet synthase family. In terms of assembly, homotetramer; dimer of dimers. Mg(2+) is required as a cofactor. The cofactor is K(+).

The protein resides in the cytoplasm. It carries out the reaction L-methionine + ATP + H2O = S-adenosyl-L-methionine + phosphate + diphosphate. Its pathway is amino-acid biosynthesis; S-adenosyl-L-methionine biosynthesis; S-adenosyl-L-methionine from L-methionine: step 1/1. Functionally, catalyzes the formation of S-adenosylmethionine (AdoMet) from methionine and ATP. The overall synthetic reaction is composed of two sequential steps, AdoMet formation and the subsequent tripolyphosphate hydrolysis which occurs prior to release of AdoMet from the enzyme. The chain is S-adenosylmethionine synthase from Acinetobacter baylyi (strain ATCC 33305 / BD413 / ADP1).